Reading from the N-terminus, the 169-residue chain is Ribosome maturation factor RimM (169 aa).

The PRC barrel domain occupies 97-169 (EDEYYWADLV…TITADWGLDY (73 aa)).

The protein belongs to the RimM family. Binds ribosomal protein uS19.

The protein resides in the cytoplasm. Its function is as follows. An accessory protein needed during the final step in the assembly of 30S ribosomal subunit, possibly for assembly of the head region. Essential for efficient processing of 16S rRNA. May be needed both before and after RbfA during the maturation of 16S rRNA. It has affinity for free ribosomal 30S subunits but not for 70S ribosomes. The chain is Ribosome maturation factor RimM from Neisseria gonorrhoeae (strain ATCC 700825 / FA 1090).